The primary structure comprises 614 residues: Protein YehQ (614 aa).

2 SWIM-type zinc fingers span residues V55–Q89 and S151–V185.

The chain is Protein YehQ (yehQ) from Escherichia coli (strain K12).